A 777-amino-acid polypeptide reads, in one-letter code: Subtilisin-like protease SBT1.4 (777 aa).

The signal sequence occupies residues 1–25 (MAKLSLSSIFFVFPLLLCFFSPSSS). Positions 26–110 (SSDGLESYIV…VIPDQAREIH (85 aa)) are cleaved as a propeptide — activation peptide. The Inhibitor I9 domain maps to 32–110 (SYIVHVQRSH…VIPDQAREIH (79 aa)). Positions 115 to 614 (PAFLGFSQNS…AGHVDPNKAL (500 aa)) constitute a Peptidase S8 domain. The Charge relay system role is filled by Asp142. Asn198 is a glycosylation site (N-linked (GlcNAc...) asparagine). Residues 199 to 223 (GTKKHAAKESRSPRDTEGHGTHTAS) form a disordered region. Over residues 205 to 218 (AKESRSPRDTEGHG) the composition is skewed to basic and acidic residues. His217 (charge relay system) is an active-site residue. N-linked (GlcNAc...) asparagine glycans are attached at residues Asn232 and Asn395. In terms of domain architecture, PA spans 376–461 (LSLVYSGDCG…VGAKAGDQIR (86 aa)). Ser546 functions as the Charge relay system in the catalytic mechanism.

This sequence belongs to the peptidase S8 family.

It localises to the secreted. This chain is Subtilisin-like protease SBT1.4, found in Arabidopsis thaliana (Mouse-ear cress).